Consider the following 200-residue polypeptide: ATP-dependent Clp protease proteolytic subunit 2 (200 aa).

Ser101 functions as the Nucleophile in the catalytic mechanism. The active site involves His126.

It belongs to the peptidase S14 family. In terms of assembly, fourteen ClpP subunits assemble into 2 heptameric rings which stack back to back to give a disk-like structure with a central cavity, resembling the structure of eukaryotic proteasomes.

The protein resides in the cytoplasm. It carries out the reaction Hydrolysis of proteins to small peptides in the presence of ATP and magnesium. alpha-casein is the usual test substrate. In the absence of ATP, only oligopeptides shorter than five residues are hydrolyzed (such as succinyl-Leu-Tyr-|-NHMec, and Leu-Tyr-Leu-|-Tyr-Trp, in which cleavage of the -Tyr-|-Leu- and -Tyr-|-Trp bonds also occurs).. Functionally, cleaves peptides in various proteins in a process that requires ATP hydrolysis. Has a chymotrypsin-like activity. Plays a major role in the degradation of misfolded proteins. This chain is ATP-dependent Clp protease proteolytic subunit 2, found in Prochlorococcus marinus (strain MIT 9313).